A 72-amino-acid chain; its full sequence is Translation initiation factor IF-1 (72 aa).

Residues M1–K72 enclose the S1-like domain. Y60 is modified (phosphotyrosine).

This sequence belongs to the IF-1 family. As to quaternary structure, component of the 30S ribosomal translation pre-initiation complex which assembles on the 30S ribosome in the order IF-2 and IF-3, IF-1 and N-formylmethionyl-tRNA(fMet); mRNA recruitment can occur at any time during PIC assembly.

Its subcellular location is the cytoplasm. One of the essential components for the initiation of protein synthesis. Stabilizes the binding of IF-2 and IF-3 on the 30S subunit to which N-formylmethionyl-tRNA(fMet) subsequently binds. Helps modulate mRNA selection, yielding the 30S pre-initiation complex (PIC). Upon addition of the 50S ribosomal subunit IF-1, IF-2 and IF-3 are released leaving the mature 70S translation initiation complex. The sequence is that of Translation initiation factor IF-1 from Shouchella clausii (strain KSM-K16) (Alkalihalobacillus clausii).